Here is a 304-residue protein sequence, read N- to C-terminus: Transcription factor bHLH94 (304 aa).

The segment at 86-107 is disordered; the sequence is VESHPPPQHRRKRRRTRNCKNK. Positions 92–104 are enriched in basic residues; it reads PQHRRKRRRTRNC. The bHLH domain occupies 112 to 163; that stretch reads NQRMTHIAVERNRRKQMNEYLAVLRSLMPSSYAQRGDQASIVGGAINYVKEL.

Homodimer. As to expression, expressed constitutively in roots, leaves, stems, and flowers.

It localises to the nucleus. The protein is Transcription factor bHLH94 (BHLH94) of Arabidopsis thaliana (Mouse-ear cress).